The primary structure comprises 211 residues: Protein GrpE (211 aa).

The segment at M1–L43 is disordered. Residues D11–A23 show a composition bias toward low complexity. Residues E33–L43 are compositionally biased toward basic and acidic residues.

The protein belongs to the GrpE family. In terms of assembly, homodimer.

It localises to the cytoplasm. In terms of biological role, participates actively in the response to hyperosmotic and heat shock by preventing the aggregation of stress-denatured proteins, in association with DnaK and GrpE. It is the nucleotide exchange factor for DnaK and may function as a thermosensor. Unfolded proteins bind initially to DnaJ; upon interaction with the DnaJ-bound protein, DnaK hydrolyzes its bound ATP, resulting in the formation of a stable complex. GrpE releases ADP from DnaK; ATP binding to DnaK triggers the release of the substrate protein, thus completing the reaction cycle. Several rounds of ATP-dependent interactions between DnaJ, DnaK and GrpE are required for fully efficient folding. This is Protein GrpE from Rhizobium etli (strain ATCC 51251 / DSM 11541 / JCM 21823 / NBRC 15573 / CFN 42).